The chain runs to 146 residues: uncharacterized protein (146 aa).

Residues 7 to 27 (FVLSITIVLVILIIIAFIWYN) form a helical membrane-spanning segment.

The protein belongs to the asfivirus E146L family.

It localises to the host membrane. The protein localises to the virion. This is an uncharacterized protein from African swine fever virus (strain Badajoz 1971 Vero-adapted) (Ba71V).